Reading from the N-terminus, the 112-residue chain is MESRATAKFMRVSPRKARLVAQNVNGLPVEDAMNILKFTPNKPADIIFGVLRSALANAEQLPGIDVDAMVVKQIVINEGPTWKRFLPRAQGRATKIRKRTSHITVILAEGQE.

It belongs to the universal ribosomal protein uL22 family. Part of the 50S ribosomal subunit.

Functionally, this protein binds specifically to 23S rRNA; its binding is stimulated by other ribosomal proteins, e.g. L4, L17, and L20. It is important during the early stages of 50S assembly. It makes multiple contacts with different domains of the 23S rRNA in the assembled 50S subunit and ribosome. Its function is as follows. The globular domain of the protein is located near the polypeptide exit tunnel on the outside of the subunit, while an extended beta-hairpin is found that lines the wall of the exit tunnel in the center of the 70S ribosome. The polypeptide is Large ribosomal subunit protein uL22 (Nitratidesulfovibrio vulgaris (strain DSM 19637 / Miyazaki F) (Desulfovibrio vulgaris)).